The primary structure comprises 482 residues: Zinc finger protein 223 (482 aa).

In terms of domain architecture, KRAB spans 8 to 78 (VTFKDVAVVF…DIATQREGNS (71 aa)). C2H2-type zinc fingers lie at residues 176–198 (HSCDECGKSFCYISALHIHQRVH), 204–226 (FKCDVCGKEFSQSLHLQTHQRVH), 232–254 (FKCEQCGRGFRCRSALTVHCKLH), 260–282 (YNCEACGRAFIHDFQLQKHQRIH), and 288–310 (FKCEICSVSFRLRSSLNRHCVVH). The C2H2-type 6; degenerate zinc-finger motif lies at 316 to 338 (NSTGEYGKGFIRRLDLCKHQTIH). 3 C2H2-type zinc fingers span residues 344 to 366 (YNCKECGKSFRRSSYLLIHQRVH), 372 to 394 (YKCDKCGKSYITKSGLDLHHRAH), and 400 to 422 (YNCDDCGKSFRQASSILNHKRLH). Residues 428–450 (FKCEDCGKKLVYRSYRKDQQKNH) form a C2H2-type 10; degenerate zinc finger.

The protein belongs to the krueppel C2H2-type zinc-finger protein family.

The protein resides in the nucleus. In terms of biological role, may be involved in transcriptional regulation. The chain is Zinc finger protein 223 (ZNF223) from Homo sapiens (Human).